Reading from the N-terminus, the 726-residue chain is X-ray repair cross-complementing protein 5 (726 aa).

Positions 8–160 constitute a VWFA domain; sequence AVVLCMDVGL…ANLKKAEITL (153 aa). The tract at residues 137–164 is leucine-zipper; the sequence is LSSPFSVDQLEVIIANLKKAEITLQFFL. The span at 175 to 186 shows a compositional bias: low complexity; that stretch reads GSSNNRGNAGSS. The tract at residues 175-198 is disordered; the sequence is GSSNNRGNAGSSDRGCGPGKGLSD. The Ku domain maps to 253-449; it reads GSSLSIRIVG…NKKFTPTESQ (197 aa). The short motif at 714–722 is the EEXXXDL motif element; the sequence is EDEGDVDDL.

Belongs to the ku80 family. Heterodimer composed of xrcc5/Ku80 and xrcc6/Ku70. Ubiquitinated via 'Lys-48'-linked polyubiquitination at DNA double strand break sites (DSBs), leading to its release from DSBs and subsequent proteasomal degradation. Polyubiquitination is not required for completion of NHEJ. In terms of tissue distribution, expressed at high levels in oocyte and testis.

The protein resides in the nucleus. In terms of biological role, single-stranded DNA-dependent ATP-dependent helicase that plays a key role in DNA non-homologous end joining (NHEJ). This is X-ray repair cross-complementing protein 5 from Xenopus laevis (African clawed frog).